Reading from the N-terminus, the 93-residue chain is Defensin alpha 4 (93 aa).

Residues 1–19 form the signal peptide; that stretch reads MRTLTLLITLLLLALHTQA. Positions 20-62 are excised as a propeptide; it reads ESPQERAKAAPDQDMVMEDQDIFISFGGYKGTVLQDAVVKAGQ. 3 disulfides stabilise this stretch: cysteine 64–cysteine 92, cysteine 66–cysteine 81, and cysteine 71–cysteine 91.

Belongs to the alpha-defensin family. Expressed in neutrophils (at protein level). Highest expression in bone marrow and to a much lesser extent in small intestine.

It is found in the secreted. Host-defense peptide that has antimicrobial activity against Gram-positive and Gram-negative bacteria and fungi (in vitro). Exhibits activity against E.coli, A.calcoaceticus, S,aureus and C.albicans. The chain is Defensin alpha 4 from Rattus norvegicus (Rat).